The following is a 343-amino-acid chain: Glutamine synthetase (343 aa).

The region spanning 3-87 (FKAEYIWIDG…CEVLNIDLTP (85 aa)) is the GS beta-grasp domain. In terms of domain architecture, GS catalytic spans 92–343 (TRAALAEVAE…CSALEKAGQV (252 aa)). Mg(2+) is bound by residues E113, E115, E174, and E181. E279 provides a ligand contact to L-glutamate.

It belongs to the glutamine synthetase family. In terms of assembly, homooctamer and homotetramer. It depends on Mg(2+) as a cofactor.

The protein resides in the cytoplasm. The catalysed reaction is L-glutamate + NH4(+) + ATP = L-glutamine + ADP + phosphate + H(+). Functionally, catalyzes the ATP-dependent biosynthesis of glutamine from glutamate and ammonia. The sequence is that of Glutamine synthetase from Streptomyces viridochromogenes.